Here is a 473-residue protein sequence, read N- to C-terminus: Lactate utilization protein B (473 aa).

2 4Fe-4S ferredoxin-type domains span residues glycine 302–tyrosine 332 and tyrosine 351–leucine 380. [4Fe-4S] cluster is bound by residues cysteine 311, cysteine 314, cysteine 317, cysteine 321, cysteine 364, cysteine 367, and cysteine 371.

It belongs to the LutB/YkgF family.

Is involved in L-lactate degradation and allows cells to grow with lactate as the sole carbon source. Has probably a role as an electron transporter during oxidation of L-lactate. The chain is Lactate utilization protein B from Bacillus cereus (strain AH820).